The sequence spans 389 residues: MSESVGCCDSVSQCFFDYYTSKILIIRSKKVGTLNRFTQALVIAYVIGYVCVYNKGYQDTDTVLSSVTTKVKGIALTNTSELGERIWDVADYIIPPQEDGSFFVLTNMIITTNQTQSKCAENPTPASTCTSHRDCKRGFNDARGDGVRTGRCVSYSASVKTCEVLSWCPLEKIVDPPNPPLLADAENFTVLIKNNIRYPKFNFNKRNILPNINSSYLTHCVFSRKTDPDCPIFRLGDIVGEAEEDFQIMAVHGGVMGVQIRWDCDLDMPQSWCVPRYTFRRLDNKDPDNNVAPGYNFRFAKYYKNSDGTETRTLIKGYGIRFDVMVFGQAGKFNIIPTLLNMGAGLALLGLVNVICDWIVLTFMKRKQHYKEQKYTYVDDFGLLHNEDK.

At 1–36 (MSESVGCCDSVSQCFFDYYTSKILIIRSKKVGTLNR) the chain is on the cytoplasmic side. A helical membrane pass occupies residues 37–57 (FTQALVIAYVIGYVCVYNKGY). Residues 58–343 (QDTDTVLSSV…NIIPTLLNMG (286 aa)) lie on the Extracellular side of the membrane. Residues Lys-70 and Lys-72 each coordinate ATP. Residues Lys-70 and Lys-72 each contribute to the CTP site. 2 N-linked (GlcNAc...) asparagine glycosylation sites follow: Asn-78 and Asn-113. 3 disulfide bridges follow: Cys-119–Cys-168, Cys-129–Cys-152, and Cys-135–Cys-162. Residue Arg-143 coordinates CTP. Asn-187 carries an N-linked (GlcNAc...) asparagine glycan. Positions 189 and 191 each coordinate ATP. Residue Thr-189 coordinates CTP. N-linked (GlcNAc...) asparagine glycosylation occurs at Asn-213. 2 cysteine pairs are disulfide-bonded: Cys-220–Cys-230 and Cys-264–Cys-273. ATP contacts are provided by Asn-296, Arg-298, and Lys-316. CTP-binding residues include Asn-296, Arg-298, and Lys-316. Residues 344–364 (AGLALLGLVNVICDWIVLTFM) traverse the membrane as a helical segment. Residues 365–389 (KRKQHYKEQKYTYVDDFGLLHNEDK) lie on the Cytoplasmic side of the membrane.

Belongs to the P2X receptor family. In terms of assembly, functional P2XRs are organized as homomeric and heteromeric trimers. Forms homotrimer.

Its subcellular location is the cell membrane. It is found in the lysosome membrane. It carries out the reaction K(+)(in) = K(+)(out). The catalysed reaction is Na(+)(in) = Na(+)(out). The enzyme catalyses Ca(2+)(in) = Ca(2+)(out). Activated by ATP. pH-dependent and inhibited by acidic pH. Its function is as follows. ATP-gated nonselective transmembrane cation channel permeable to potassium, sodium and calcium. CTP, but not GTP or UTP, functions as a weak affinity agonist for P2RX4. Activated by extracellularly released ATP, it plays multiple role in immunity and central nervous system physiology. Could also function as an ATP-gated cation channel of lysosomal membranes. The chain is P2X purinoceptor 4a (p2rx4a) from Danio rerio (Zebrafish).